A 234-amino-acid polypeptide reads, in one-letter code: tRNA (guanine-N(1)-)-methyltransferase (234 aa).

Residues Gly-112 and 132-137 contribute to the S-adenosyl-L-methionine site; that span reads IGDFIL.

It belongs to the RNA methyltransferase TrmD family. Homodimer.

The protein localises to the cytoplasm. The enzyme catalyses guanosine(37) in tRNA + S-adenosyl-L-methionine = N(1)-methylguanosine(37) in tRNA + S-adenosyl-L-homocysteine + H(+). In terms of biological role, specifically methylates guanosine-37 in various tRNAs. The protein is tRNA (guanine-N(1)-)-methyltransferase of Campylobacter jejuni subsp. doylei (strain ATCC BAA-1458 / RM4099 / 269.97).